A 651-amino-acid polypeptide reads, in one-letter code: MKDYDELLKYYELHETIGTGGFAKVKLACHILTGEMVAIKIMDKNTLGSDLPRIKTEIEALKNLRHQHICQLYHVLETANKIFMVLEYCPGGELFDYIISQDRLSEEETRVVFRQIVSAVAYVHSQGYAHRDLKPENLLFDEYHKLKLIDFGLCAKPKGNKDYHLQTCCGSLAYAAPELIQGKSYLGSEADVWSMGILLYVLMCGFLPFDDDNVMALYKKIMRGKYDVPKWLSPSSILLLQQMLQVDPKKRISMKNLLNHPWIMQDYNYPVEWQSKNPFIHLDDDCVTELSVHHRNNRQTMEDLISLWQYDHLTATYLLLLAKKARGKPVRLRLSSFSCGQASATPFTDIKSNNWSLEDVTASDKNYVAGLIDYDWCEDDLSTGAATPRTSQFTKYWTESNGVESKSLTPALCRTPANKLKNKENVYTPKSAVKNEEYFMFPEPKTPVNKNQHKREILTTPNRYTTPSKARNQCLKETPIKIPVNSTGTDKLMTGVISPERRCRSVELDLNQAHMEETPKRKGAKVFGSLERGLDKVITVLTRSKRKGSARDGPRRLKLHYNVTTTRLVNPDQLLNEIMSILPKKHVDFVQKGYTLKCQTQSDFGKVTMQFELEVCQLQKPDVVGIRRQRLKGDAWVYKRLVEDILSSCKV.

In terms of domain architecture, Protein kinase spans 11–263; sequence YELHETIGTG…MKNLLNHPWI (253 aa). ATP contacts are provided by residues 17–25 and K40; that span reads IGTGGFAKV. T56 bears the Phosphothreonine; by autocatalysis mark. Residue D132 is the Proton acceptor of the active site. Residue Y163 is modified to Phosphotyrosine; by autocatalysis. Position 167 is a phosphothreonine; by autocatalysis (T167). S171 and S253 each carry phosphoserine; by autocatalysis. Residues 282 to 321 are UBA-like; sequence LDDDCVTELSVHHRNNRQTMEDLISLWQYDHLTATYLLLL. An autoinhibitory region region spans residues 326-651; that stretch reads RGKPVRLRLS…VEDILSSCKV (326 aa). Phosphoserine; by autocatalysis occurs at positions 336, 343, and 356. Phosphotyrosine is present on Y367. S391 is subject to Phosphoserine; by autocatalysis. T398 is subject to Phosphothreonine; by autocatalysis. At S407 the chain carries Phosphoserine; by autocatalysis. At T409 the chain carries Phosphothreonine. S431 is subject to Phosphoserine; by autocatalysis. T478 is modified (phosphothreonine). T494 is modified (phosphothreonine; by autocatalysis). S498 is modified (phosphoserine). S505 carries the post-translational modification Phosphoserine; by autocatalysis. At T518 the chain carries Phosphothreonine. S529 is modified (phosphoserine; by autocatalysis). S529 is subject to Phosphoserine. T539 carries the post-translational modification Phosphothreonine; by autocatalysis. Residues 602-651 enclose the KA1 domain; that stretch reads SDFGKVTMQFELEVCQLQKPDVVGIRRQRLKGDAWVYKRLVEDILSSCKV.

Belongs to the protein kinase superfamily. CAMK Ser/Thr protein kinase family. SNF1 subfamily. In terms of assembly, monomer. Interacts with ZNF622 and PPP1R8. Post-translationally, autophosphorylated: autophosphorylation of the T-loop at Thr-167 and Ser-171 is required for activation. Thr-478 phosphorylation during mitosis promotes interaction with PPP1R8. In terms of tissue distribution, expressed in placenta, kidney, thymus, testis, ovary and intestine.

Its subcellular location is the cell membrane. It carries out the reaction L-tyrosyl-[protein] + ATP = O-phospho-L-tyrosyl-[protein] + ADP + H(+). The catalysed reaction is L-seryl-[protein] + ATP = O-phospho-L-seryl-[protein] + ADP + H(+). The enzyme catalyses L-threonyl-[protein] + ATP = O-phospho-L-threonyl-[protein] + ADP + H(+). Activated by autophosphorylation of the T-loop at Thr-167 and Ser-171: in contrast to other members of the SNF1 subfamily, phosphorylation at Thr-167 is not mediated by STK11/LKB1 but via autophosphorylation instead. Inhibited by calcium-binding. Kinase activity is also regulated by reducing agents: dithiothreitol (DTT) or reduced glutathione are required for kinase activity in vitro; such dependence is however not due to the presence of disulfide bonds. Functionally, serine/threonine-protein kinase involved in various processes such as cell cycle regulation, self-renewal of stem cells, apoptosis and splicing regulation. Has a broad substrate specificity; phosphorylates BCL2L14, CDC25B, MAP3K5/ASK1 and ZNF622. Acts as an activator of apoptosis by phosphorylating and activating MAP3K5/ASK1. Acts as a regulator of cell cycle, notably by mediating phosphorylation of CDC25B, promoting localization of CDC25B to the centrosome and the spindle poles during mitosis. Plays a key role in cell proliferation and carcinogenesis. Required for proliferation of embryonic and postnatal multipotent neural progenitors. Phosphorylates and inhibits BCL2L14, possibly leading to affect mammary carcinogenesis by mediating inhibition of the pro-apoptotic function of BCL2L14. Also involved in the inhibition of spliceosome assembly during mitosis by phosphorylating ZNF622, thereby contributing to its redirection to the nucleus. May also play a role in primitive hematopoiesis. The protein is Maternal embryonic leucine zipper kinase (MELK) of Homo sapiens (Human).